A 503-amino-acid polypeptide reads, in one-letter code: ESX-5 secretion system protein EccD5 (503 aa).

10 helical membrane passes run 137–157, 169–189, 200–220, 224–244, 250–270, 272–292, 359–379, 414–434, 443–463, and 480–500; these read VVAV…ASGV, LTTI…MMLL, VADI…ASAP, VGSP…ALAL, RLAI…ASLS, MVAA…CVVM, FLSG…TSLC, ITLA…YALV, IVAS…AVVP, and YLCL…YAAI.

The protein belongs to the EccD/Snm4 family. In terms of assembly, part of the ESX-5 / type VII secretion system (T7SS), which is composed of cytosolic and membrane components. The ESX-5 membrane complex is composed of EccB5, EccC5, EccD5 and EccE5.

It is found in the cell inner membrane. Functionally, part of the ESX-5 specialized secretion system, which is responsible for the secretion of EsxN and a number of PE_PGRS and PPE proteins. This component is essential for ESX-5 complex stability and secretion. The sequence is that of ESX-5 secretion system protein EccD5 from Mycobacterium marinum (strain ATCC BAA-535 / M).